Consider the following 133-residue polypeptide: MIIDPISDMFTRIRNANLKLHEKVDVPSSKLKLGIAKILKEEGYISNYEIKGIENQTQSVLRIHLRYTSKGKVVLQGIKRISKSSLRIYKGHSDVPRTIGGLGVTIISTSKGLMTDGQARKDKIGGEVIGCVW.

Belongs to the universal ribosomal protein uS8 family. As to quaternary structure, part of the 30S ribosomal subunit. Contacts proteins S5 and S12.

One of the primary rRNA binding proteins, it binds directly to 16S rRNA central domain where it helps coordinate assembly of the platform of the 30S subunit. The protein is Small ribosomal subunit protein uS8 of Endomicrobium trichonymphae.